Consider the following 89-residue polypeptide: MAHKKGASSSRNGRDSNAQRLGVKRFGGQFVKAGEIIVRQRGTHFHPGELVGRGKDDTLFALSAGHVQFGHRRGRRVVNVVEQVAAPAA.

Positions 1-21 (MAHKKGASSSRNGRDSNAQRL) are disordered. A compositionally biased stretch (polar residues) spans 7–19 (ASSSRNGRDSNAQ).

This sequence belongs to the bacterial ribosomal protein bL27 family.

This chain is Large ribosomal subunit protein bL27, found in Frankia alni (strain DSM 45986 / CECT 9034 / ACN14a).